Here is a 134-residue protein sequence, read N- to C-terminus: Putative pre-16S rRNA nuclease (134 aa).

Belongs to the YqgF nuclease family.

It localises to the cytoplasm. Could be a nuclease involved in processing of the 5'-end of pre-16S rRNA. The chain is Putative pre-16S rRNA nuclease from Helicobacter pylori (strain Shi470).